Reading from the N-terminus, the 94-residue chain is Large ribosomal subunit protein uL23 (94 aa).

It belongs to the universal ribosomal protein uL23 family. In terms of assembly, part of the 50S ribosomal subunit. Contacts protein L29, and trigger factor when it is bound to the ribosome.

One of the early assembly proteins it binds 23S rRNA. One of the proteins that surrounds the polypeptide exit tunnel on the outside of the ribosome. Forms the main docking site for trigger factor binding to the ribosome. The polypeptide is Large ribosomal subunit protein uL23 (Symbiobacterium thermophilum (strain DSM 24528 / JCM 14929 / IAM 14863 / T)).